Consider the following 450-residue polypeptide: uncharacterized protein (450 aa).

Lys283 carries the post-translational modification N6-(pyridoxal phosphate)lysine.

It belongs to the class-III pyridoxal-phosphate-dependent aminotransferase family. It depends on pyridoxal 5'-phosphate as a cofactor.

Essential for glycerol catabolism. This is an uncharacterized protein from Bacillus subtilis (strain 168).